The chain runs to 411 residues: Serine hydroxymethyltransferase (411 aa).

Residues Leu-119 and 123–125 (GHL) each bind (6S)-5,6,7,8-tetrahydrofolate. Lys-228 carries the post-translational modification N6-(pyridoxal phosphate)lysine. (6S)-5,6,7,8-tetrahydrofolate is bound at residue 351 to 353 (SPF).

This sequence belongs to the SHMT family. In terms of assembly, homodimer. It depends on pyridoxal 5'-phosphate as a cofactor.

Its subcellular location is the cytoplasm. The catalysed reaction is (6R)-5,10-methylene-5,6,7,8-tetrahydrofolate + glycine + H2O = (6S)-5,6,7,8-tetrahydrofolate + L-serine. It functions in the pathway one-carbon metabolism; tetrahydrofolate interconversion. Its pathway is amino-acid biosynthesis; glycine biosynthesis; glycine from L-serine: step 1/1. Functionally, catalyzes the reversible interconversion of serine and glycine with tetrahydrofolate (THF) serving as the one-carbon carrier. This reaction serves as the major source of one-carbon groups required for the biosynthesis of purines, thymidylate, methionine, and other important biomolecules. Also exhibits THF-independent aldolase activity toward beta-hydroxyamino acids, producing glycine and aldehydes, via a retro-aldol mechanism. This chain is Serine hydroxymethyltransferase, found in Clostridium beijerinckii (strain ATCC 51743 / NCIMB 8052) (Clostridium acetobutylicum).